The following is a 467-amino-acid chain: Heat shock factor protein 3 (467 aa).

The DNA-binding element occupies 16-121 (VPGFLAKLWA…LLENIKRKVS (106 aa)). Residues 128-201 (LKVCAEDLHK…LSLMRGNYIV (74 aa)) are hydrophobic repeat HR-A/B. Residues 364–389 (IQDFLNCIDASLEELQAMLSGKQYSF) form a hydrophobic repeat HR-C region. The segment at 427–449 (EDLGASERETAGSKGGQEGTESC) is disordered.

Belongs to the HSF family. In terms of assembly, homotrimer. As to expression, expressed in most tissues. High levels are found in erythrocytes and low levels in liver.

It is found in the cytoplasm. It localises to the nucleus. Its function is as follows. DNA-binding protein that specifically binds heat shock promoter elements (HSE) and activates transcription. HSF3 binds DNA constitutively only when the C-terminal region is deleted. The sequence is that of Heat shock factor protein 3 (HSF3) from Gallus gallus (Chicken).